The sequence spans 958 residues: Glycine dehydrogenase (decarboxylating) (958 aa).

Lys-705 carries the N6-(pyridoxal phosphate)lysine modification.

This sequence belongs to the GcvP family. As to quaternary structure, the glycine cleavage system is composed of four proteins: P, T, L and H. It depends on pyridoxal 5'-phosphate as a cofactor.

The enzyme catalyses N(6)-[(R)-lipoyl]-L-lysyl-[glycine-cleavage complex H protein] + glycine + H(+) = N(6)-[(R)-S(8)-aminomethyldihydrolipoyl]-L-lysyl-[glycine-cleavage complex H protein] + CO2. Its function is as follows. The glycine cleavage system catalyzes the degradation of glycine. The P protein binds the alpha-amino group of glycine through its pyridoxal phosphate cofactor; CO(2) is released and the remaining methylamine moiety is then transferred to the lipoamide cofactor of the H protein. This Bdellovibrio bacteriovorus (strain ATCC 15356 / DSM 50701 / NCIMB 9529 / HD100) protein is Glycine dehydrogenase (decarboxylating).